A 111-amino-acid polypeptide reads, in one-letter code: Resistin-like alpha (111 aa).

The first 23 residues, 1–23 (MKTTTCSLLICISLLQLMVPVNT), serve as a signal peptide directing secretion. 5 cysteine pairs are disulfide-bonded: C55-C108, C67-C107, C76-C93, C78-C95, and C82-C97.

The protein belongs to the resistin/FIZZ family. In terms of assembly, monomer. In terms of tissue distribution, highest levels in adipose tissue.

It localises to the secreted. Functionally, probable hormone. Plays a role in pulmonary vascular remodeling. This Mus musculus (Mouse) protein is Resistin-like alpha (Retnla).